An 892-amino-acid chain; its full sequence is Translation initiation factor IF-2 (892 aa).

Positions 66–305 are disordered; it reads TRSTLNIPGT…SLQQGFQKPA (240 aa). Positions 68–82 are enriched in polar residues; the sequence is STLNIPGTGGKSKSV. Composition is skewed to basic and acidic residues over residues 93–159 and 166–216; these read VKRD…KDKV and DMTK…EENK. The segment covering 254–269 has biased composition (basic residues); sequence GRGRNAKAARPAKKGK. Over residues 270–282 the composition is skewed to basic and acidic residues; the sequence is HAESKADREEARA. Positions 391-560 constitute a tr-type G domain; it reads PRAPVVTIMG…LLQAEVLELK (170 aa). Residues 400–407 form a G1 region; sequence GHVDHGKT. A GTP-binding site is contributed by 400–407; sequence GHVDHGKT. The tract at residues 425 to 429 is G2; it reads GITQH. The interval 446 to 449 is G3; the sequence is DTPG. Residues 446 to 450 and 500 to 503 contribute to the GTP site; these read DTPGH and NKID. The G4 stretch occupies residues 500–503; it reads NKID. The interval 536 to 538 is G5; that stretch reads SAK.

The protein belongs to the TRAFAC class translation factor GTPase superfamily. Classic translation factor GTPase family. IF-2 subfamily.

It localises to the cytoplasm. Functionally, one of the essential components for the initiation of protein synthesis. Protects formylmethionyl-tRNA from spontaneous hydrolysis and promotes its binding to the 30S ribosomal subunits. Also involved in the hydrolysis of GTP during the formation of the 70S ribosomal complex. The sequence is that of Translation initiation factor IF-2 from Salmonella typhi.